The sequence spans 456 residues: Bifunctional protein GlmU (456 aa).

Residues 1–229 (MYKCALILAA…FEEILGVNSR (229 aa)) are pyrophosphorylase. Residues 8–11 (LAAG), Lys-22, Gln-73, and 78–79 (GT) each bind UDP-N-acetyl-alpha-D-glucosamine. Asp-103 lines the Mg(2+) pocket. Residues Gly-140, Glu-155, Asn-170, and Asn-227 each contribute to the UDP-N-acetyl-alpha-D-glucosamine site. Asn-227 lines the Mg(2+) pocket. Residues 230–250 (LQLCQVGKVMQKRINEKHMEN) form a linker region. The segment at 251-456 (GSTLIDPDNT…GWVDKKGLLK (206 aa)) is N-acetyltransferase. UDP-N-acetyl-alpha-D-glucosamine contacts are provided by Arg-332 and Lys-350. His-362 functions as the Proton acceptor in the catalytic mechanism. UDP-N-acetyl-alpha-D-glucosamine-binding residues include Tyr-365 and Asn-376. Acetyl-CoA-binding positions include 385–386 (NY), Ala-422, and Arg-439.

It in the N-terminal section; belongs to the N-acetylglucosamine-1-phosphate uridyltransferase family. In the C-terminal section; belongs to the transferase hexapeptide repeat family. In terms of assembly, homotrimer. Mg(2+) is required as a cofactor.

It is found in the cytoplasm. The enzyme catalyses alpha-D-glucosamine 1-phosphate + acetyl-CoA = N-acetyl-alpha-D-glucosamine 1-phosphate + CoA + H(+). It catalyses the reaction N-acetyl-alpha-D-glucosamine 1-phosphate + UTP + H(+) = UDP-N-acetyl-alpha-D-glucosamine + diphosphate. It participates in nucleotide-sugar biosynthesis; UDP-N-acetyl-alpha-D-glucosamine biosynthesis; N-acetyl-alpha-D-glucosamine 1-phosphate from alpha-D-glucosamine 6-phosphate (route II): step 2/2. It functions in the pathway nucleotide-sugar biosynthesis; UDP-N-acetyl-alpha-D-glucosamine biosynthesis; UDP-N-acetyl-alpha-D-glucosamine from N-acetyl-alpha-D-glucosamine 1-phosphate: step 1/1. The protein operates within bacterial outer membrane biogenesis; LPS lipid A biosynthesis. In terms of biological role, catalyzes the last two sequential reactions in the de novo biosynthetic pathway for UDP-N-acetylglucosamine (UDP-GlcNAc). The C-terminal domain catalyzes the transfer of acetyl group from acetyl coenzyme A to glucosamine-1-phosphate (GlcN-1-P) to produce N-acetylglucosamine-1-phosphate (GlcNAc-1-P), which is converted into UDP-GlcNAc by the transfer of uridine 5-monophosphate (from uridine 5-triphosphate), a reaction catalyzed by the N-terminal domain. The protein is Bifunctional protein GlmU of Clostridium acetobutylicum (strain ATCC 824 / DSM 792 / JCM 1419 / IAM 19013 / LMG 5710 / NBRC 13948 / NRRL B-527 / VKM B-1787 / 2291 / W).